The primary structure comprises 422 residues: Dihydrolipoyllysine-residue succinyltransferase component of 2-oxoglutarate dehydrogenase complex (422 aa).

One can recognise a Lipoyl-binding domain in the interval 1–76 (MPEVKVPELA…EVGQAIAIIG (76 aa)). N6-lipoyllysine is present on Lys-42. A disordered region spans residues 77 to 184 (EGSGNASKEN…APAKEEKKYN (108 aa)). Composition is skewed to polar residues over residues 80–94 (GNASKENSNDNTPQQ) and 116–130 (NQANDDNQQRINATP). In terms of domain architecture, Peripheral subunit-binding (PSBD) spans 127 to 163 (NATPSARRYARENGVNLAEVSPKTNDVVRKEDIDKKQ). Positions 152 to 163 (DVVRKEDIDKKQ) are enriched in basic and acidic residues. Positions 164–176 (QAPASTQTTQQAP) are enriched in low complexity. Residues His-393 and Asp-397 contribute to the active site.

The protein belongs to the 2-oxoacid dehydrogenase family. In terms of assembly, forms a 24-polypeptide structural core with octahedral symmetry. Part of the 2-oxoglutarate dehydrogenase (OGDH) complex composed of E1 (2-oxoglutarate dehydrogenase), E2 (dihydrolipoamide succinyltransferase) and E3 (dihydrolipoamide dehydrogenase); the complex contains multiple copies of the three enzymatic components (E1, E2 and E3). (R)-lipoate serves as cofactor.

It catalyses the reaction N(6)-[(R)-dihydrolipoyl]-L-lysyl-[protein] + succinyl-CoA = N(6)-[(R)-S(8)-succinyldihydrolipoyl]-L-lysyl-[protein] + CoA. It functions in the pathway amino-acid degradation; L-lysine degradation via saccharopine pathway; glutaryl-CoA from L-lysine: step 6/6. Its function is as follows. E2 component of the 2-oxoglutarate dehydrogenase (OGDH) complex which catalyzes the second step in the conversion of 2-oxoglutarate to succinyl-CoA and CO(2). The chain is Dihydrolipoyllysine-residue succinyltransferase component of 2-oxoglutarate dehydrogenase complex (odhB) from Staphylococcus aureus (strain Mu50 / ATCC 700699).